Reading from the N-terminus, the 197-residue chain is Carnitine operon protein CaiE (197 aa).

The segment at Thr177–Gln197 is disordered. Positions Gly188–Gln197 are enriched in basic and acidic residues.

This sequence belongs to the transferase hexapeptide repeat family.

It participates in amine and polyamine metabolism; carnitine metabolism. In terms of biological role, overproduction of CaiE stimulates the activity of CaiB and CaiD. The chain is Carnitine operon protein CaiE from Proteus sp. (strain LE138).